A 352-amino-acid chain; its full sequence is Coproporphyrin III ferrochelatase (352 aa).

2 residues coordinate Fe-coproporphyrin III: Ser-52 and Tyr-121. Residues His-178 and Glu-267 each coordinate Fe(2+).

This sequence belongs to the ferrochelatase family.

The protein resides in the cytoplasm. It carries out the reaction Fe-coproporphyrin III + 2 H(+) = coproporphyrin III + Fe(2+). Its pathway is porphyrin-containing compound metabolism; protoheme biosynthesis. Involved in coproporphyrin-dependent heme b biosynthesis. Catalyzes the insertion of ferrous iron into coproporphyrin III to form Fe-coproporphyrin III. The protein is Coproporphyrin III ferrochelatase of Propionibacterium freudenreichii subsp. freudenreichii.